A 179-amino-acid chain; its full sequence is Large ribosomal subunit protein uL5 (179 aa).

Belongs to the universal ribosomal protein uL5 family. As to quaternary structure, part of the 50S ribosomal subunit; part of the 5S rRNA/L5/L18/L25 subcomplex. Contacts the 5S rRNA and the P site tRNA. Forms a bridge to the 30S subunit in the 70S ribosome.

This is one of the proteins that bind and probably mediate the attachment of the 5S RNA into the large ribosomal subunit, where it forms part of the central protuberance. In the 70S ribosome it contacts protein S13 of the 30S subunit (bridge B1b), connecting the 2 subunits; this bridge is implicated in subunit movement. Contacts the P site tRNA; the 5S rRNA and some of its associated proteins might help stabilize positioning of ribosome-bound tRNAs. In Actinobacillus pleuropneumoniae serotype 5b (strain L20), this protein is Large ribosomal subunit protein uL5.